The sequence spans 323 residues: PI-PLC X domain-containing protein 1 (323 aa).

The PI-PLC X-box domain maps to 30–206 (RLWDVPLHHL…QVIVSYEDES (177 aa)).

Widely expressed.

The protein resides in the cytoplasm. The chain is PI-PLC X domain-containing protein 1 (PLCXD1) from Homo sapiens (Human).